Consider the following 544-residue polypeptide: Membrane protein insertase YidC (544 aa).

Transmembrane regions (helical) follow at residues 6–26 (NILL…WQTD), 345–365 (LLMF…LITL), 423–443 (GGCL…WVLL), 460–480 (LSVQ…MFVM), and 503–523 (VVFT…WLVG).

Belongs to the OXA1/ALB3/YidC family. Type 1 subfamily. Interacts with the Sec translocase complex via SecD. Specifically interacts with transmembrane segments of nascent integral membrane proteins during membrane integration.

It localises to the cell inner membrane. Functionally, required for the insertion and/or proper folding and/or complex formation of integral membrane proteins into the membrane. Involved in integration of membrane proteins that insert both dependently and independently of the Sec translocase complex, as well as at least some lipoproteins. Aids folding of multispanning membrane proteins. The chain is Membrane protein insertase YidC from Shewanella woodyi (strain ATCC 51908 / MS32).